We begin with the raw amino-acid sequence, 588 residues long: Glutamyl-tRNA(Gln) amidotransferase subunit B, mitochondrial (588 aa).

A mitochondrion-targeting transit peptide spans 1–109; that stretch reads MLRSWIGSGT…RAPTSTSETP (109 aa). The segment covering 22-35 has biased composition (low complexity); that stretch reads SSLPSPKASFSSAP. The interval 22-50 is disordered; it reads SSLPSPKASFSSAPNRYLQPPTSADRVPL.

This sequence belongs to the GatB/GatE family. GatB subfamily. In terms of assembly, subunit of the heterotrimeric GatCAB amidotransferase (AdT) complex, composed of A, B and C subunits.

The protein resides in the mitochondrion. It carries out the reaction L-glutamyl-tRNA(Gln) + L-glutamine + ATP + H2O = L-glutaminyl-tRNA(Gln) + L-glutamate + ADP + phosphate + H(+). In terms of biological role, allows the formation of correctly charged Gln-tRNA(Gln) through the transamidation of misacylated Glu-tRNA(Gln) in the mitochondria. The reaction takes place in the presence of glutamine and ATP through an activated gamma-phospho-Glu-tRNA(Gln). This is Glutamyl-tRNA(Gln) amidotransferase subunit B, mitochondrial from Penicillium rubens (strain ATCC 28089 / DSM 1075 / NRRL 1951 / Wisconsin 54-1255) (Penicillium chrysogenum).